We begin with the raw amino-acid sequence, 392 residues long: NADH-quinone oxidoreductase subunit D 1 (392 aa).

Belongs to the complex I 49 kDa subunit family. As to quaternary structure, NDH-1 is composed of 14 different subunits. Subunits NuoB, C, D, E, F, and G constitute the peripheral sector of the complex.

It localises to the cell inner membrane. The catalysed reaction is a quinone + NADH + 5 H(+)(in) = a quinol + NAD(+) + 4 H(+)(out). Functionally, NDH-1 shuttles electrons from NADH, via FMN and iron-sulfur (Fe-S) centers, to quinones in the respiratory chain. The immediate electron acceptor for the enzyme in this species is believed to be a menaquinone. Couples the redox reaction to proton translocation (for every two electrons transferred, four hydrogen ions are translocated across the cytoplasmic membrane), and thus conserves the redox energy in a proton gradient. The sequence is that of NADH-quinone oxidoreductase subunit D 1 from Cytophaga hutchinsonii (strain ATCC 33406 / DSM 1761 / CIP 103989 / NBRC 15051 / NCIMB 9469 / D465).